The primary structure comprises 151 residues: Large ribosomal subunit protein bL9 (151 aa).

This sequence belongs to the bacterial ribosomal protein bL9 family.

Functionally, binds to the 23S rRNA. In Francisella philomiragia subsp. philomiragia (strain ATCC 25017 / CCUG 19701 / FSC 153 / O#319-036), this protein is Large ribosomal subunit protein bL9.